The primary structure comprises 760 residues: Polyribonucleotide nucleotidyltransferase (760 aa).

Residues D492 and D498 each contribute to the Mg(2+) site. Positions 559 to 618 (PQHAEVFVNPDIIRIIIGPGGKNIKAITATTGASIDIEDSGRVSIFAPTLEAMEMAREMV) constitute a KH domain. Residues 628-702 (GKNYTGKVRK…SRKAVLLEEQ (75 aa)) enclose the S1 motif domain. Residues 706-760 (WKPEDTARPSGPREGGRRDGGRDGRRDGGRDGRRDGGRDGGRRDGGRRDGGRDRN) form a disordered region. A compositionally biased stretch (basic and acidic residues) spans 719–760 (EGGRRDGGRDGRRDGGRDGRRDGGRDGGRRDGGRRDGGRDRN).

This sequence belongs to the polyribonucleotide nucleotidyltransferase family. The cofactor is Mg(2+).

The protein localises to the cytoplasm. It catalyses the reaction RNA(n+1) + phosphate = RNA(n) + a ribonucleoside 5'-diphosphate. Functionally, involved in mRNA degradation. Catalyzes the phosphorolysis of single-stranded polyribonucleotides processively in the 3'- to 5'-direction. This chain is Polyribonucleotide nucleotidyltransferase, found in Nitratidesulfovibrio vulgaris (strain ATCC 29579 / DSM 644 / CCUG 34227 / NCIMB 8303 / VKM B-1760 / Hildenborough) (Desulfovibrio vulgaris).